Consider the following 329-residue polypeptide: MNQVDYLRISLVDRCNFRCQYCMPEQAKLEFLAQSEVLTGDEILTLVRDVFLPLGFTRFRLTGGEPLVRPDVVEIVGKIAALPQVQDLSMTTNAYLLTELAEDLYAAGLRRINISLDSLIPAVFDQIVGTQGRTRWQQVWEGIQAAYRVGFDPLKLNVVVIPGVNDQEVPDLAALSLDRHWHIRFIEFMPIGNAHLFHHKGWIPSEELRQRIRDRWGLTEGYVRGNGPADVFQIPGAKGTLGFISQMSECFCDRCNRVRLSADGWLRPCLLNETGQIDLKTGLRDNVPIEELRERVRQLLLLKPEINYKGRDSGTAGAEYHRTMSQIGG.

The Radical SAM core domain occupies 1–229 (MNQVDYLRIS…EGYVRGNGPA (229 aa)). Residue Arg8 coordinates GTP. [4Fe-4S] cluster is bound by residues Cys15 and Cys19. Tyr21 serves as a coordination point for S-adenosyl-L-methionine. [4Fe-4S] cluster is bound at residue Cys22. Arg60 provides a ligand contact to GTP. Residue Gly64 participates in S-adenosyl-L-methionine binding. Residue Thr91 coordinates GTP. Residue Ser115 coordinates S-adenosyl-L-methionine. Lys155 contributes to the GTP binding site. Position 189 (Met189) interacts with S-adenosyl-L-methionine. [4Fe-4S] cluster is bound by residues Cys252 and Cys255. 257–259 (RVR) provides a ligand contact to GTP. A [4Fe-4S] cluster-binding site is contributed by Cys269.

This sequence belongs to the radical SAM superfamily. MoaA family. As to quaternary structure, monomer and homodimer. [4Fe-4S] cluster is required as a cofactor.

It carries out the reaction GTP + AH2 + S-adenosyl-L-methionine = (8S)-3',8-cyclo-7,8-dihydroguanosine 5'-triphosphate + 5'-deoxyadenosine + L-methionine + A + H(+). The protein operates within cofactor biosynthesis; molybdopterin biosynthesis. Catalyzes the cyclization of GTP to (8S)-3',8-cyclo-7,8-dihydroguanosine 5'-triphosphate. In Cyanothece sp. (strain PCC 7425 / ATCC 29141), this protein is GTP 3',8-cyclase.